A 229-amino-acid chain; its full sequence is Large ribosomal subunit protein uL1 (229 aa).

Belongs to the universal ribosomal protein uL1 family. In terms of assembly, part of the 50S ribosomal subunit.

In terms of biological role, binds directly to 23S rRNA. The L1 stalk is quite mobile in the ribosome, and is involved in E site tRNA release. Protein L1 is also a translational repressor protein, it controls the translation of the L11 operon by binding to its mRNA. This chain is Large ribosomal subunit protein uL1, found in Actinobacillus succinogenes (strain ATCC 55618 / DSM 22257 / CCUG 43843 / 130Z).